The primary structure comprises 123 residues: Small ribosomal subunit protein uS13 (123 aa).

The disordered stretch occupies residues 89–123; the sequence is GRRHRSGLPVRGQRTRTNARTRKGKRKAVAKKKAK. Residues 101-123 show a composition bias toward basic residues; the sequence is QRTRTNARTRKGKRKAVAKKKAK.

This sequence belongs to the universal ribosomal protein uS13 family. As to quaternary structure, part of the 30S ribosomal subunit. Forms a loose heterodimer with protein S19. Forms two bridges to the 50S subunit in the 70S ribosome.

Located at the top of the head of the 30S subunit, it contacts several helices of the 16S rRNA. In the 70S ribosome it contacts the 23S rRNA (bridge B1a) and protein L5 of the 50S subunit (bridge B1b), connecting the 2 subunits; these bridges are implicated in subunit movement. Contacts the tRNAs in the A and P-sites. The sequence is that of Small ribosomal subunit protein uS13 from Cutibacterium acnes (strain DSM 16379 / KPA171202) (Propionibacterium acnes).